Here is a 523-residue protein sequence, read N- to C-terminus: GMP synthase [glutamine-hydrolyzing] (523 aa).

The Glutamine amidotransferase type-1 domain occupies 8–205 (KILILDFGSQ…VVNICGCETK (198 aa)). Cysteine 85 (nucleophile) is an active-site residue. Active-site residues include histidine 179 and glutamate 181. Residues 206-398 (WTAENIIEDA…LGLPAEMINR (193 aa)) enclose the GMPS ATP-PPase domain. 233-239 (SGGVDSS) is a binding site for ATP.

Homodimer.

It catalyses the reaction XMP + L-glutamine + ATP + H2O = GMP + L-glutamate + AMP + diphosphate + 2 H(+). It participates in purine metabolism; GMP biosynthesis; GMP from XMP (L-Gln route): step 1/1. Functionally, catalyzes the synthesis of GMP from XMP. The sequence is that of GMP synthase [glutamine-hydrolyzing] (guaA) from Haemophilus influenzae (strain ATCC 51907 / DSM 11121 / KW20 / Rd).